Here is a 79-residue protein sequence, read N- to C-terminus: Acyl carrier protein (79 aa).

Residues 2–77 (SDIEARVRKI…SAIDYANTHQ (76 aa)) enclose the Carrier domain. S37 carries the O-(pantetheine 4'-phosphoryl)serine modification.

This sequence belongs to the acyl carrier protein (ACP) family. Post-translationally, 4'-phosphopantetheine is transferred from CoA to a specific serine of apo-ACP by AcpS. This modification is essential for activity because fatty acids are bound in thioester linkage to the sulfhydryl of the prosthetic group.

It is found in the cytoplasm. Its pathway is lipid metabolism; fatty acid biosynthesis. Carrier of the growing fatty acid chain in fatty acid biosynthesis. The polypeptide is Acyl carrier protein (Verminephrobacter eiseniae (strain EF01-2)).